The primary structure comprises 447 residues: NADP-specific glutamate dehydrogenase (447 aa).

Substrate-binding residues include Lys-92, Gln-113, and Lys-116. Lys-128 functions as the Proton donor in the catalytic mechanism. A substrate-binding site is contributed by Gly-167. NADP(+) is bound by residues Thr-212 and Asn-243. Ser-379 contacts substrate.

It belongs to the Glu/Leu/Phe/Val dehydrogenases family. In terms of assembly, homohexamer.

It catalyses the reaction L-glutamate + NADP(+) + H2O = 2-oxoglutarate + NH4(+) + NADPH + H(+). In terms of biological role, catalyzes the reversible oxidative deamination of glutamate to alpha-ketoglutarate and ammonia. This chain is NADP-specific glutamate dehydrogenase (gdh), found in Corynebacterium glutamicum (strain ATCC 13032 / DSM 20300 / JCM 1318 / BCRC 11384 / CCUG 27702 / LMG 3730 / NBRC 12168 / NCIMB 10025 / NRRL B-2784 / 534).